Reading from the N-terminus, the 484-residue chain is Calcium-dependent protein kinase 31 (484 aa).

The N-myristoyl glycine moiety is linked to residue glycine 2. In terms of domain architecture, Protein kinase spans tyrosine 28–methionine 290. ATP contacts are provided by residues leucine 34–threonine 42 and lysine 57. The active-site Proton acceptor is the aspartate 156. Serine 196 is modified (phosphoserine). An autoinhibitory domain region spans residues alanine 295–isoleucine 325. 4 consecutive EF-hand domains span residues glutamate 332–asparagine 367, leucine 368–leucine 403, aspartate 404–glycine 439, and isoleucine 444–leucine 474. Ca(2+) is bound by residues aspartate 345, aspartate 347, serine 349, threonine 351, glutamate 356, aspartate 381, aspartate 383, asparagine 385, threonine 387, glutamate 392, aspartate 417, aspartate 419, aspartate 421, histidine 423, glutamate 428, aspartate 452, aspartate 454, aspartate 456, lysine 458, and glutamate 463.

Belongs to the protein kinase superfamily. Ser/Thr protein kinase family. CDPK subfamily.

It is found in the membrane. It catalyses the reaction L-seryl-[protein] + ATP = O-phospho-L-seryl-[protein] + ADP + H(+). It carries out the reaction L-threonyl-[protein] + ATP = O-phospho-L-threonyl-[protein] + ADP + H(+). Activated by calcium. Autophosphorylation may play an important role in the regulation of the kinase activity. May play a role in signal transduction pathways that involve calcium as a second messenger. This Arabidopsis thaliana (Mouse-ear cress) protein is Calcium-dependent protein kinase 31 (CPK31).